The primary structure comprises 186 residues: UPF0303 protein ZMO1353 (186 aa).

The protein belongs to the UPF0303 family.

The polypeptide is UPF0303 protein ZMO1353 (Zymomonas mobilis subsp. mobilis (strain ATCC 31821 / ZM4 / CP4)).